Reading from the N-terminus, the 394-residue chain is 3-amino-4-hydroxybenzoate 2-monooxygenase (394 aa).

Ala-16 and Arg-109 together coordinate FAD. Catalysis depends on Tyr-214, which acts as the Proton acceptor. Asp-287 serves as a coordination point for FAD.

It belongs to the 6-hydroxynicotinate 3-monooxygenase family. The cofactor is FAD.

The enzyme catalyses 3-amino-4-hydroxybenzoate + NADPH + O2 + H(+) = 3-amino-2,4-dihydroxybenzoate + NADP(+) + H2O. The protein operates within antibiotic biosynthesis. In terms of biological role, part of a gene cluster involved in the biosynthesis of cremeomycin, a light-sensitive o-diazoquinone with antibacterial and antiproliferative effects. Catalyzes the hydroxylation of 3-amino-4-hydroxybenzoate (3,4-AHBA) to 3-amino-2,4-dihydroxybenzoate (3,2,4-ADHBA). The polypeptide is 3-amino-4-hydroxybenzoate 2-monooxygenase (Streptomyces cremeus).